The sequence spans 357 residues: UPF0283 membrane protein BAbS19_I09770 (357 aa).

The interval 1 to 36 (MSDKTPRKPTAFRLEQPARVSAASEQEEPRRPRAVK) is disordered. The segment covering 27-36 (EEPRRPRAVK) has biased composition (basic and acidic residues). Helical transmembrane passes span 78 to 98 (ILFG…TEDL) and 109 to 129 (LGWT…AIIL).

The protein belongs to the UPF0283 family.

The protein resides in the cell inner membrane. This Brucella abortus (strain S19) protein is UPF0283 membrane protein BAbS19_I09770.